A 570-amino-acid chain; its full sequence is High-affinity hexose transporter HXT7 (570 aa).

Over M1 to S60 the chain is Cytoplasmic. A helical membrane pass occupies residues A61 to W81. Over D82 to G116 the chain is Extracellular. N91 carries N-linked (GlcNAc...) asparagine glycosylation. The helical transmembrane segment at L117–G137 threads the bilayer. Over D138 to K143 the chain is Cytoplasmic. A helical membrane pass occupies residues V144–I164. Residues N165 to R174 lie on the Extracellular side of the membrane. The helical transmembrane segment at I175–V195 threads the bilayer. Residues S196 to R201 are Cytoplasmic-facing. A helical membrane pass occupies residues G202–T222. Residues N223–R236 lie on the Extracellular side of the membrane. Residue N228 is glycosylated (N-linked (GlcNAc...) asparagine). A helical membrane pass occupies residues V237–P257. The Cytoplasmic segment spans residues E258–D340. The helical transmembrane segment at N341–S357 threads the bilayer. At D358–S363 the chain is on the extracellular side. Residues I364–V381 traverse the membrane as a helical segment. Topologically, residues E382–T388 are cytoplasmic. The chain crosses the membrane as a helical span at residues C389–V409. The Extracellular segment spans residues T410–V431. A helical transmembrane segment spans residues F432 to V452. Residues S453–T469 are Cytoplasmic-facing. The helical transmembrane segment at A470–I490 threads the bilayer. N491 is a topological domain (extracellular). Residues F492–V512 traverse the membrane as a helical segment. Residues V513–K570 are Cytoplasmic-facing. T556 is subject to Phosphothreonine. K560 participates in a covalent cross-link: Glycyl lysine isopeptide (Lys-Gly) (interchain with G-Cter in ubiquitin).

This sequence belongs to the major facilitator superfamily. Sugar transporter (TC 2.A.1.1) family.

Its subcellular location is the membrane. In terms of biological role, high-affinity glucose transporter. This is High-affinity hexose transporter HXT7 (HXT7) from Saccharomyces cerevisiae (strain ATCC 204508 / S288c) (Baker's yeast).